A 345-amino-acid polypeptide reads, in one-letter code: S-adenosylmethionine:tRNA ribosyltransferase-isomerase (345 aa).

It belongs to the QueA family. Monomer.

The protein resides in the cytoplasm. The catalysed reaction is 7-aminomethyl-7-carbaguanosine(34) in tRNA + S-adenosyl-L-methionine = epoxyqueuosine(34) in tRNA + adenine + L-methionine + 2 H(+). Its pathway is tRNA modification; tRNA-queuosine biosynthesis. In terms of biological role, transfers and isomerizes the ribose moiety from AdoMet to the 7-aminomethyl group of 7-deazaguanine (preQ1-tRNA) to give epoxyqueuosine (oQ-tRNA). In Helicobacter pylori (strain ATCC 700392 / 26695) (Campylobacter pylori), this protein is S-adenosylmethionine:tRNA ribosyltransferase-isomerase.